The primary structure comprises 827 residues: SH3-containing GRB2-like protein 3-interacting protein 1 (827 aa).

Disordered stretches follow at residues methionine 1–lysine 115, serine 142–leucine 205, and isoleucine 223–threonine 278. 2 stretches are compositionally biased toward basic and acidic residues: residues arginine 16–glycine 32 and proline 40–lysine 54. A phosphoserine mark is found at serine 78, serine 104, serine 105, serine 107, serine 149, serine 151, serine 156, and serine 169. Residues threonine 180 and threonine 182 each carry the phosphothreonine modification. Residue serine 236 is modified to Phosphoserine. Over residues threonine 245–proline 260 the composition is skewed to pro residues. Phosphothreonine is present on residues threonine 247 and threonine 259. Serine 265, serine 287, serine 289, serine 300, serine 316, and serine 319 each carry phosphoserine. Residues serine 265–alanine 276 show a composition bias toward polar residues. Basic and acidic residues predominate over residues histidine 314–valine 333. The disordered stretch occupies residues histidine 314–glutamate 523. Phosphothreonine is present on residues threonine 324, threonine 328, and threonine 335. Residues proline 336 to aspartate 345 are compositionally biased toward low complexity. The span at serine 346 to valine 369 shows a compositional bias: pro residues. Serine 371 bears the Phosphoserine mark. Residues glutamate 377–tyrosine 392 show a composition bias toward basic and acidic residues. Serine 398 carries the phosphoserine modification. Threonine 409 is modified (phosphothreonine). Residues alanine 436–threonine 455 are compositionally biased toward low complexity. Residues threonine 456–lysine 474 are compositionally biased toward pro residues. Composition is skewed to low complexity over residues serine 481–serine 491 and proline 498–threonine 521. Serine 485 is subject to Phosphoserine. The MHD domain occupies threonine 558–aspartate 826. 4 interaction with DPF motifs-containing proteins regions span residues proline 560–threonine 566, serine 592–proline 594, threonine 666–asparagine 669, and serine 812–arginine 817. Residues methionine 648 to asparagine 827 form a necessary and sufficient to mediate interaction with CANX region.

Interacts with proteins essential or regulating the formation of functional clathrin-coated pits. Interacts with CANX. Interacts with AP2A1. Interacts with EPS15. Interacts with SH3GL3. Interacts with AMPH. Interacts with ITSN1 (via SH3 domains). Interacts with and REPS1. As to expression, specifically expressed in brain (at protein level).

The protein localises to the membrane. It is found in the clathrin-coated pit. Functionally, may function in clathrin-mediated endocytosis. Has both a membrane binding/tubulating activity and the ability to recruit proteins essential to the formation of functional clathrin-coated pits. Has a preference for membranes enriched in phosphatidylserine and phosphoinositides and is required for the endocytosis of the transferrin receptor. May also bind tubulin. May play a role in the regulation of energy homeostasis. This Rattus norvegicus (Rat) protein is SH3-containing GRB2-like protein 3-interacting protein 1 (Sgip1).